A 100-amino-acid chain; its full sequence is Integration host factor subunit alpha (100 aa).

The disordered stretch occupies residues 54–73 (DLRDKRQRPGRNPKTGEEIP).

The protein belongs to the bacterial histone-like protein family. As to quaternary structure, heterodimer of an alpha and a beta chain.

Its function is as follows. This protein is one of the two subunits of integration host factor, a specific DNA-binding protein that functions in genetic recombination as well as in transcriptional and translational control. In Pseudomonas savastanoi pv. phaseolicola (strain 1448A / Race 6) (Pseudomonas syringae pv. phaseolicola (strain 1448A / Race 6)), this protein is Integration host factor subunit alpha.